The sequence spans 466 residues: Cysteine--tRNA ligase (466 aa).

Residue C28 participates in Zn(2+) binding. The short motif at 30–40 (PTVYNYIHIGN) is the 'HIGH' region element. Residues C208, H233, and E237 each contribute to the Zn(2+) site. Positions 265 to 269 (KMSKS) match the 'KMSKS' region motif. ATP is bound at residue K268.

Belongs to the class-I aminoacyl-tRNA synthetase family. In terms of assembly, monomer. Requires Zn(2+) as cofactor.

The protein resides in the cytoplasm. The enzyme catalyses tRNA(Cys) + L-cysteine + ATP = L-cysteinyl-tRNA(Cys) + AMP + diphosphate. This chain is Cysteine--tRNA ligase, found in Staphylococcus carnosus (strain TM300).